A 165-amino-acid chain; its full sequence is Transcription elongation factor A protein-like 1 (165 aa).

A disordered region spans residues 1 to 101 (MENTRSENEE…EQPPCGVGKH (101 aa)). Residues 33–60 (CSEEDQSSEDLSSEEQSSEEEFFPEELL) show a composition bias toward acidic residues.

Belongs to the TFS-II family. TFA subfamily.

It is found in the nucleus. In terms of biological role, may be involved in transcriptional regulation. Modulates various viral and cellular promoters in a promoter context-dependent manner. Does not bind DNA directly. This Mus musculus (Mouse) protein is Transcription elongation factor A protein-like 1.